We begin with the raw amino-acid sequence, 349 residues long: D-alanine--D-alanine ligase (349 aa).

The 206-residue stretch at 140-345 (NILFEAMGIP…MKDVFTWLLE (206 aa)) folds into the ATP-grasp domain. 169 to 224 (NLSFSYPVFIKPTLGGSSVNTGMAKTAEEAMTLVDKIFVTDDRVLVQKLVSGTEVS) lines the ATP pocket. 3 residues coordinate Mg(2+): Asp-300, Glu-312, and Asn-314.

It belongs to the D-alanine--D-alanine ligase family. The cofactor is Mg(2+). Requires Mn(2+) as cofactor.

It is found in the cytoplasm. The catalysed reaction is 2 D-alanine + ATP = D-alanyl-D-alanine + ADP + phosphate + H(+). It functions in the pathway cell wall biogenesis; peptidoglycan biosynthesis. Functionally, cell wall formation. In Leptospira biflexa serovar Patoc (strain Patoc 1 / Ames), this protein is D-alanine--D-alanine ligase.